Consider the following 361-residue polypeptide: Chorismate synthase (361 aa).

The disordered stretch occupies residues 37 to 59 (TEEDLQHDLDRRRPGTSRYTTPR). Over residues 40–49 (DLQHDLDRRR) the composition is skewed to basic and acidic residues. NADP(+) is bound by residues Arg48 and Arg54. FMN contacts are provided by residues 125–127 (RSS), 238–239 (NA), Gly278, 293–297 (KPTSS), and Arg319.

The protein belongs to the chorismate synthase family. As to quaternary structure, homotetramer. FMNH2 serves as cofactor.

The catalysed reaction is 5-O-(1-carboxyvinyl)-3-phosphoshikimate = chorismate + phosphate. Its pathway is metabolic intermediate biosynthesis; chorismate biosynthesis; chorismate from D-erythrose 4-phosphate and phosphoenolpyruvate: step 7/7. Functionally, catalyzes the anti-1,4-elimination of the C-3 phosphate and the C-6 proR hydrogen from 5-enolpyruvylshikimate-3-phosphate (EPSP) to yield chorismate, which is the branch point compound that serves as the starting substrate for the three terminal pathways of aromatic amino acid biosynthesis. This reaction introduces a second double bond into the aromatic ring system. The protein is Chorismate synthase of Erwinia tasmaniensis (strain DSM 17950 / CFBP 7177 / CIP 109463 / NCPPB 4357 / Et1/99).